Reading from the N-terminus, the 345-residue chain is Anthranilate phosphoribosyltransferase (345 aa).

5-phospho-alpha-D-ribose 1-diphosphate contacts are provided by residues Gly84, Gly87–Asp88, Thr92, Asn94–Thr97, Lys112–Ser120, and Ser124. Gly84 contributes to the anthranilate binding site. Residue Ser96 participates in Mg(2+) binding. Residue Asn115 participates in anthranilate binding. Arg170 serves as a coordination point for anthranilate. Mg(2+) contacts are provided by Asp229 and Glu230.

Belongs to the anthranilate phosphoribosyltransferase family. In terms of assembly, homodimer. Mg(2+) is required as a cofactor.

It carries out the reaction N-(5-phospho-beta-D-ribosyl)anthranilate + diphosphate = 5-phospho-alpha-D-ribose 1-diphosphate + anthranilate. It functions in the pathway amino-acid biosynthesis; L-tryptophan biosynthesis; L-tryptophan from chorismate: step 2/5. In terms of biological role, catalyzes the transfer of the phosphoribosyl group of 5-phosphorylribose-1-pyrophosphate (PRPP) to anthranilate to yield N-(5'-phosphoribosyl)-anthranilate (PRA). This chain is Anthranilate phosphoribosyltransferase, found in Xanthomonas oryzae pv. oryzae (strain MAFF 311018).